The sequence spans 292 residues: Pyridoxal 5'-phosphate synthase subunit PdxS (292 aa).

Residue Asp-22 participates in D-ribose 5-phosphate binding. The active-site Schiff-base intermediate with D-ribose 5-phosphate is the Lys-79. Gly-151 lines the D-ribose 5-phosphate pocket. A D-glyceraldehyde 3-phosphate-binding site is contributed by Arg-163. D-ribose 5-phosphate-binding positions include Gly-212 and 233 to 234; that span reads GS.

Belongs to the PdxS/SNZ family. As to quaternary structure, in the presence of PdxT, forms a dodecamer of heterodimers.

It catalyses the reaction aldehydo-D-ribose 5-phosphate + D-glyceraldehyde 3-phosphate + L-glutamine = pyridoxal 5'-phosphate + L-glutamate + phosphate + 3 H2O + H(+). It functions in the pathway cofactor biosynthesis; pyridoxal 5'-phosphate biosynthesis. Functionally, catalyzes the formation of pyridoxal 5'-phosphate from ribose 5-phosphate (RBP), glyceraldehyde 3-phosphate (G3P) and ammonia. The ammonia is provided by the PdxT subunit. Can also use ribulose 5-phosphate and dihydroxyacetone phosphate as substrates, resulting from enzyme-catalyzed isomerization of RBP and G3P, respectively. The chain is Pyridoxal 5'-phosphate synthase subunit PdxS from Thermoanaerobacter pseudethanolicus (strain ATCC 33223 / 39E) (Clostridium thermohydrosulfuricum).